We begin with the raw amino-acid sequence, 86 residues long: Omega-theraphotoxin-Hhn1f 3 (86 aa).

The first 21 residues, 1 to 21 (MKSIVFVALFGLALLAVACSA), serve as a signal peptide directing secretion. The propeptide occupies 22-50 (SEDAHKELLKEVVRAMVVDKTDAVQAEER). Cystine bridges form between C52-C66, C59-C71, and C65-C78.

It belongs to the neurotoxin 10 (Hwtx-1) family. 17 (Hntx-9) subfamily. Expressed by the venom gland.

The protein localises to the secreted. In terms of biological role, ion channel inhibitor. The sequence is that of Omega-theraphotoxin-Hhn1f 3 from Cyriopagopus hainanus (Chinese bird spider).